A 287-amino-acid polypeptide reads, in one-letter code: Bifunctional protein FolD (287 aa).

NADP(+)-binding positions include 165–167 (GRS), Ser190, and Ile231.

It belongs to the tetrahydrofolate dehydrogenase/cyclohydrolase family. In terms of assembly, homodimer.

It carries out the reaction (6R)-5,10-methylene-5,6,7,8-tetrahydrofolate + NADP(+) = (6R)-5,10-methenyltetrahydrofolate + NADPH. It catalyses the reaction (6R)-5,10-methenyltetrahydrofolate + H2O = (6R)-10-formyltetrahydrofolate + H(+). It functions in the pathway one-carbon metabolism; tetrahydrofolate interconversion. Functionally, catalyzes the oxidation of 5,10-methylenetetrahydrofolate to 5,10-methenyltetrahydrofolate and then the hydrolysis of 5,10-methenyltetrahydrofolate to 10-formyltetrahydrofolate. This chain is Bifunctional protein FolD, found in Carboxydothermus hydrogenoformans (strain ATCC BAA-161 / DSM 6008 / Z-2901).